Consider the following 218-residue polypeptide: Sec-independent protein translocase protein TatB (218 aa).

Residues 1–21 (MFDIGFSELLLVLVIGLVVLG) form a helical membrane-spanning segment. Disordered stretches follow at residues 126–145 (AESA…DVDK) and 174–218 (SSVD…GGDR). Basic and acidic residues predominate over residues 199-218 (HSTDSHGADQPRTHQPGGDR).

The protein belongs to the TatB family. The Tat system comprises two distinct complexes: a TatABC complex, containing multiple copies of TatA, TatB and TatC subunits, and a separate TatA complex, containing only TatA subunits. Substrates initially bind to the TatABC complex, which probably triggers association of the separate TatA complex to form the active translocon.

The protein resides in the cell inner membrane. Part of the twin-arginine translocation (Tat) system that transports large folded proteins containing a characteristic twin-arginine motif in their signal peptide across membranes. Together with TatC, TatB is part of a receptor directly interacting with Tat signal peptides. TatB may form an oligomeric binding site that transiently accommodates folded Tat precursor proteins before their translocation. The chain is Sec-independent protein translocase protein TatB from Yersinia enterocolitica serotype O:8 / biotype 1B (strain NCTC 13174 / 8081).